The primary structure comprises 451 residues: Chromosomal replication initiator protein DnaA (451 aa).

The segment at 1-72 (MSLPTSLWDK…TELLDELSDT (72 aa)) is domain I, interacts with DnaA modulators. Residues 72-114 (TPPQIRLQIGSRSTEMPTKNSHEPSHRKAAAPPAGTTISHTQA) form a domain II region. Positions 81–90 (GSRSTEMPTK) are enriched in polar residues. A disordered region spans residues 81–106 (GSRSTEMPTKNSHEPSHRKAAAPPAG). The interval 115–331 (NINSNFTFDS…GALKRVIANA (217 aa)) is domain III, AAA+ region. ATP contacts are provided by glycine 159, glycine 161, lysine 162, and threonine 163. The domain IV, binds dsDNA stretch occupies residues 332–451 (HFTGQSITVD…YKNLMRILSG (120 aa)).

This sequence belongs to the DnaA family. As to quaternary structure, oligomerizes as a right-handed, spiral filament on DNA at oriC.

Its subcellular location is the cytoplasm. Its function is as follows. Plays an essential role in the initiation and regulation of chromosomal replication. ATP-DnaA binds to the origin of replication (oriC) to initiate formation of the DNA replication initiation complex once per cell cycle. Binds the DnaA box (a 9 base pair repeat at the origin) and separates the double-stranded (ds)DNA. Forms a right-handed helical filament on oriC DNA; dsDNA binds to the exterior of the filament while single-stranded (ss)DNA is stabiized in the filament's interior. The ATP-DnaA-oriC complex binds and stabilizes one strand of the AT-rich DNA unwinding element (DUE), permitting loading of DNA polymerase. After initiation quickly degrades to an ADP-DnaA complex that is not apt for DNA replication. Binds acidic phospholipids. This is Chromosomal replication initiator protein DnaA from Coxiella burnetii (strain CbuK_Q154) (Coxiella burnetii (strain Q154)).